Reading from the N-terminus, the 264-residue chain is Fructose-1,6-bisphosphatase/inositol-1-monophosphatase (264 aa).

Residues E70, D86, L88, and D89 each contribute to the Mg(2+) site. Substrate-binding positions include 89–91 (DGT), R185, and A190. D214 serves as a coordination point for Mg(2+).

The protein belongs to the inositol monophosphatase superfamily. FBPase class 4 family. Mg(2+) serves as cofactor.

It catalyses the reaction beta-D-fructose 1,6-bisphosphate + H2O = beta-D-fructose 6-phosphate + phosphate. It carries out the reaction a myo-inositol phosphate + H2O = myo-inositol + phosphate. Phosphatase with broad specificity; it can dephosphorylate fructose 1,6-bisphosphate, and both D and L isomers of inositol-1-phosphate (I-1-P). This chain is Fructose-1,6-bisphosphatase/inositol-1-monophosphatase (suhB), found in Aquifex aeolicus (strain VF5).